Consider the following 109-residue polypeptide: Photosystem II reaction center Psb28 protein (109 aa).

This sequence belongs to the Psb28 family. In terms of assembly, part of the photosystem II complex.

Its subcellular location is the plastid. It is found in the chloroplast thylakoid membrane. The protein is Photosystem II reaction center Psb28 protein of Cyanidioschyzon merolae (strain NIES-3377 / 10D) (Unicellular red alga).